A 225-amino-acid polypeptide reads, in one-letter code: UPF0758 protein Sfri_3828 (225 aa).

The MPN domain maps to 102 to 224; sequence ILTNPDLTRD…IVSFAERGWI (123 aa). Zn(2+) contacts are provided by His173, His175, and Asp186. The short motif at 173-186 is the JAMM motif element; the sequence is HNHPSGIAEPSQAD.

The protein belongs to the UPF0758 family.

The protein is UPF0758 protein Sfri_3828 of Shewanella frigidimarina (strain NCIMB 400).